The primary structure comprises 180 residues: Ribosome maturation factor RimM (180 aa).

The region spanning 99–179 (NNEYYWKDIV…IVIKNWKQTF (81 aa)) is the PRC barrel domain.

The protein belongs to the RimM family. Binds ribosomal protein uS19.

Its subcellular location is the cytoplasm. Functionally, an accessory protein needed during the final step in the assembly of 30S ribosomal subunit, possibly for assembly of the head region. Essential for efficient processing of 16S rRNA. May be needed both before and after RbfA during the maturation of 16S rRNA. It has affinity for free ribosomal 30S subunits but not for 70S ribosomes. This is Ribosome maturation factor RimM from Buchnera aphidicola subsp. Baizongia pistaciae (strain Bp).